The sequence spans 516 residues: Extracellular endo-inulinase inu2 (516 aa).

An N-terminal signal peptide occupies residues 1–23 (MLNPKVAYMVWMTCLGLTLPSQA). Substrate-binding positions include 41–43 (MNE) and asparagine 61. Glutamate 43 is an active-site residue. Residues asparagine 108 and asparagine 109 are each glycosylated (N-linked (GlcNAc...) asparagine). Aspartate 176 is a binding site for substrate. A glycan (N-linked (GlcNAc...) asparagine) is linked at asparagine 210. Asparagine 320 contributes to the substrate binding site. An N-linked (GlcNAc...) asparagine glycan is attached at asparagine 372.

It belongs to the glycosyl hydrolase 32 family.

The protein localises to the secreted. It carries out the reaction Endohydrolysis of (2-&gt;1)-beta-D-fructosidic linkages in inulin.. In terms of biological role, endo-inulinase involved in utilization of the plant storage polymer inulin, consisting of fructooligosaccharides with a degree of polymerization (DP) value from 2 to 60. This Aspergillus ficuum protein is Extracellular endo-inulinase inu2 (inu2).